Here is a 385-residue protein sequence, read N- to C-terminus: 3-hydroxyisobutyryl-CoA hydrolase, mitochondrial (385 aa).

Residues E120, G145, E168, and D176 each contribute to the substrate site.

Belongs to the enoyl-CoA hydratase/isomerase family.

It localises to the mitochondrion. It catalyses the reaction 3-hydroxy-2-methylpropanoyl-CoA + H2O = 3-hydroxy-2-methylpropanoate + CoA + H(+). It participates in amino-acid degradation; L-valine degradation. Its function is as follows. Hydrolyzes 3-hydroxyisobutyryl-CoA (HIBYL-CoA), a saline catabolite. Has high activity toward isobutyryl-CoA. Could be an isobutyryl-CoA dehydrogenase that functions in valine catabolism. Also hydrolyzes 3-hydroxypropanoyl-CoA. The polypeptide is 3-hydroxyisobutyryl-CoA hydrolase, mitochondrial (HIBCH) (Gallus gallus (Chicken)).